A 123-amino-acid chain; its full sequence is uncharacterized protein (123 aa).

The chain crosses the membrane as a helical span at residues 5-25; the sequence is GTLVIIFAIVLILCIMLLFFY. Residues 32–53 are disordered; it reads KSGVLPPPIPPPTPPPPKKKYD. The span at 36-47 shows a compositional bias: pro residues; sequence LPPPIPPPTPPP.

Belongs to the asfivirus CP123L family.

It is found in the host membrane. Its subcellular location is the virion. This is an uncharacterized protein from Ornithodoros (relapsing fever ticks).